We begin with the raw amino-acid sequence, 461 residues long: D-phenylhydantoinase (461 aa).

Residues histidine 59, histidine 61, and lysine 151 each coordinate a divalent metal cation. Position 151 is an N6-carboxylysine (lysine 151). A substrate-binding site is contributed by tyrosine 156. A divalent metal cation contacts are provided by histidine 182 and histidine 239. Serine 286 contacts substrate. Aspartate 313 provides a ligand contact to a divalent metal cation. Residue asparagine 335 coordinates substrate.

The protein belongs to the metallo-dependent hydrolases superfamily. Hydantoinase/dihydropyrimidinase family. As to quaternary structure, homotetramer. Requires a divalent metal cation as cofactor. Post-translationally, carboxylation allows a single lysine to coordinate two divalent metal cations.

It catalyses the reaction D-5-phenylhydantoin + H2O = N-carbamoyl-D-phenylglycine + H(+). Functionally, catalyzes the stereospecific hydrolysis of the cyclic amide bond of D-hydantoin derivatives with an aromatic side chains at the 5'-position. Has no activity on dihydropyrimidines. The physiological function is unknown. The polypeptide is D-phenylhydantoinase (Escherichia coli O127:H6 (strain E2348/69 / EPEC)).